Here is a 757-residue protein sequence, read N- to C-terminus: Glutathione biosynthesis bifunctional protein GshAB (757 aa).

The glutamate--cysteine ligase stretch occupies residues 1–337 (MKIQHIIHEN…LGKARLAEVA (337 aa)). Residues 494–753 (KKVLQKAGFN…LTQNVIKMLF (260 aa)) form the ATP-grasp domain. Residue 521–580 (ALFENRAVVIKPKSTNYGLGITIFQQGVQNREDFAKALEIAFREDKEVMVEDYLVGTEYR) participates in ATP binding. Mg(2+) is bound by residues aspartate 702, glutamate 723, and asparagine 725. Mn(2+) is bound by residues aspartate 702, glutamate 723, and asparagine 725.

This sequence in the N-terminal section; belongs to the glutamate--cysteine ligase type 1 family. Type 2 subfamily. As to quaternary structure, monomer. Requires Mg(2+) as cofactor. Mn(2+) is required as a cofactor.

It carries out the reaction L-cysteine + L-glutamate + ATP = gamma-L-glutamyl-L-cysteine + ADP + phosphate + H(+). It catalyses the reaction gamma-L-glutamyl-L-cysteine + glycine + ATP = glutathione + ADP + phosphate + H(+). Its pathway is sulfur metabolism; glutathione biosynthesis; glutathione from L-cysteine and L-glutamate: step 1/2. It functions in the pathway sulfur metabolism; glutathione biosynthesis; glutathione from L-cysteine and L-glutamate: step 2/2. Its function is as follows. Synthesizes glutathione from L-glutamate and L-cysteine via gamma-L-glutamyl-L-cysteine. This is Glutathione biosynthesis bifunctional protein GshAB from Pasteurella multocida (strain Pm70).